The sequence spans 602 residues: Aspartate--tRNA(Asp/Asn) ligase (602 aa).

Glu176 is an L-aspartate binding site. Residues 200–203 (QQFK) are aspartate. Arg222 and His452 together coordinate L-aspartate. 222–224 (RDE) lines the ATP pocket. Glu490 lines the ATP pocket. Arg497 contacts L-aspartate. An ATP-binding site is contributed by 542–545 (GIDR).

The protein belongs to the class-II aminoacyl-tRNA synthetase family. Type 1 subfamily. As to quaternary structure, homodimer.

It localises to the cytoplasm. The catalysed reaction is tRNA(Asx) + L-aspartate + ATP = L-aspartyl-tRNA(Asx) + AMP + diphosphate. In terms of biological role, aspartyl-tRNA synthetase with relaxed tRNA specificity since it is able to aspartylate not only its cognate tRNA(Asp) but also tRNA(Asn). Reaction proceeds in two steps: L-aspartate is first activated by ATP to form Asp-AMP and then transferred to the acceptor end of tRNA(Asp/Asn). In Rickettsia akari (strain Hartford), this protein is Aspartate--tRNA(Asp/Asn) ligase.